Reading from the N-terminus, the 85-residue chain is Conotoxin Mi15a (85 aa).

Residues 1–23 form the signal peptide; the sequence is MEKLTVLILVATVLLTIQVLGQS. A propeptide spanning residues 24-49 is cleaved from the precursor; sequence DRDKHLKRRPKQYATKRLSARMRGHR. Pyrrolidone carboxylic acid is present on Q50.

The protein belongs to the conotoxin O2 superfamily. Contains 4 disulfide bonds. Expressed by the venom duct.

Its subcellular location is the secreted. The protein is Conotoxin Mi15a of Conus miles (Soldier cone).